Consider the following 845-residue polypeptide: Extended synaptotagmin-2 (845 aa).

The segment covering 1–17 (MSSAGGEGPEAGPGRAG) has biased composition (gly residues). The segment at 1-26 (MSSAGGEGPEAGPGRAGGRSEPEAPG) is disordered. Topologically, residues 1-27 (MSSAGGEGPEAGPGRAGGRSEPEAPGS) are cytoplasmic. A helical transmembrane segment spans residues 28-48 (ALSVDLPGLLGQLARSFALLL). Topologically, residues 49–51 (PVY) are lumenal. The helical transmembrane segment at 52–72 (ALGYLGLSFSWVLLALGLLAW) threads the bilayer. Residues 73–845 (CRRSRGLKAS…EDGTRPQVIT (773 aa)) are Cytoplasmic-facing. One can recognise an SMP-LTD domain in the interval 115-294 (DTERAEWLNK…LPNRITVPLV (180 aa)). 2 consecutive C2 domains span residues 293–413 (LVSE…DEWF) and 442–563 (VLAD…QLSN). Positions 324, 325, 337, 384, 385, 386, 388, 390, and 391 each coordinate Ca(2+). The segment at 584-664 (QERPPDYQHS…RDLGRSSSSL (81 aa)) is disordered. Positions 612–628 (SQMSASPGTGGANTAPS) are enriched in polar residues. Residues Ser-615 and Ser-617 each carry the phosphoserine modification. Thr-629 is modified (phosphothreonine). Basic and acidic residues predominate over residues 634 to 645 (VDDKPAMEEKPQ). Phosphoserine occurs at positions 660, 662, 663, 667, 679, 682, and 685. Positions 710–832 (PLGQIQLTIR…ELAKGWTQWY (123 aa)) constitute a C2 3 domain. Positions 757–764 (KRRSGRRK) are required for phosphatidylinositol 4,5-bisphosphate-dependent location at the cell membrane.

It belongs to the extended synaptotagmin family. Homodimer. Interacts with ESYT1 and ESYT3. Interacts with FGFR1 that has been activated by FGF1 binding. Interacts with the AP-2 complex; identified in a complex with the AP-2 complex and FGFR1.

The protein localises to the cell membrane. It is found in the endoplasmic reticulum membrane. Its function is as follows. Tethers the endoplasmic reticulum to the cell membrane and promotes the formation of appositions between the endoplasmic reticulum and the cell membrane. Binds glycerophospholipids in a barrel-like domain and may play a role in cellular lipid transport. Plays a role in FGF signaling via its role in the rapid internalization of FGFR1 that has been activated by FGF1 binding; this occurs most likely via the AP-2 complex. Promotes the localization of SACM1L at endoplasmic reticulum-plasma membrane contact sites (EPCS). This Mus musculus (Mouse) protein is Extended synaptotagmin-2 (Esyt2).